The primary structure comprises 132 residues: MAPSPRTSSRQDATALPSMSSTFWAFMILASLLIAYCSQLAAGTCEIVTLDRDSSQPRRTIARQTARCACRKGQIAGTTRARPACVDARIIKTKQWCDMLPCLEGEGCDLLINRSGWTCTQPGGRIKTTTVS.

The signal sequence occupies residues 1–43 (MAPSPRTSSRQDATALPSMSSTFWAFMILASLLIAYCSQLAAG). N113 carries an N-linked (GlcNAc...) asparagine glycan.

Belongs to the TAFA family. As to expression, expressed in the subcutaneous, brown, epididymal and perirenal adipose tissue (at protein level).

It localises to the secreted. Functionally, acts as a chemokine-like protein by regulating cell proliferation and migration through activation of G protein-coupled receptors (GPCRs), such as S1PR2 and FPR2. Stimulates chemotactic migration of macrophages mediated by the MAPK3/ERK1 and AKT1 pathway. Blocks TNFSF11/RANKL-induced osteoclast formation from macrophages by inhibiting up-regulation of osteoclast fusogenic and differentiation genes. Stimulation of macrophage migration and inhibition of osteoclast formation is mediated through the GPCR FPR2. Acts as an adipokine by negatively regulating vascular smooth muscle cell (VSMC) proliferation and migration in response to platelet-derived growth factor stimulation via GPCR S1PR2 and G protein GNA12/GNA13-transmitted RHOA signaling. Inhibits injury-induced cell proliferation and neointima formation in the femoral arteries. The chain is Chemokine-like protein TAFA-5 (Tafa5) from Mus musculus (Mouse).